Consider the following 218-residue polypeptide: Probable nicotinate-nucleotide adenylyltransferase (218 aa).

It belongs to the NadD family.

It carries out the reaction nicotinate beta-D-ribonucleotide + ATP + H(+) = deamido-NAD(+) + diphosphate. It participates in cofactor biosynthesis; NAD(+) biosynthesis; deamido-NAD(+) from nicotinate D-ribonucleotide: step 1/1. Its function is as follows. Catalyzes the reversible adenylation of nicotinate mononucleotide (NaMN) to nicotinic acid adenine dinucleotide (NaAD). The protein is Probable nicotinate-nucleotide adenylyltransferase of Burkholderia lata (strain ATCC 17760 / DSM 23089 / LMG 22485 / NCIMB 9086 / R18194 / 383).